A 917-amino-acid polypeptide reads, in one-letter code: Catenin alpha (917 aa).

Phosphothreonine is present on residues T643 and T645. A phosphoserine mark is found at S659 and S662. Residues 878 to 890 (PLVRPEKPEEVRA) show a composition bias toward basic and acidic residues. The disordered stretch occupies residues 878 to 905 (PLVRPEKPEEVRAKVRKGSQKKVQNPIH).

This sequence belongs to the vinculin/alpha-catenin family. Interacts with arm/armadillo protein. Rapidly phosphorylated by CK2 and more slowly by CK1.

The protein resides in the cytoplasm. Its subcellular location is the cytoskeleton. The protein localises to the cell junction. It is found in the adherens junction. It localises to the cell membrane. Its function is as follows. Associates with the cytoplasmic domain of a variety of cadherins. The association of catenins to cadherins produces a complex which is linked to the actin filament network, and which seems to be of primary importance for cadherins cell-adhesion properties. In Drosophila melanogaster (Fruit fly), this protein is Catenin alpha.